The following is a 462-amino-acid chain: Exodeoxyribonuclease 7 large subunit (462 aa).

Belongs to the XseA family. As to quaternary structure, heterooligomer composed of large and small subunits.

Its subcellular location is the cytoplasm. The enzyme catalyses Exonucleolytic cleavage in either 5'- to 3'- or 3'- to 5'-direction to yield nucleoside 5'-phosphates.. Functionally, bidirectionally degrades single-stranded DNA into large acid-insoluble oligonucleotides, which are then degraded further into small acid-soluble oligonucleotides. This chain is Exodeoxyribonuclease 7 large subunit, found in Proteus mirabilis (strain HI4320).